Consider the following 256-residue polypeptide: PHD finger protein ALFIN-LIKE 4 (256 aa).

The segment at 149–195 is disordered; the sequence is QSKTANGSSKNKSGSKPPKRPNSDSKPQKQVQAKYEEENGGRGNGGD. Over residues 154-164 the composition is skewed to low complexity; the sequence is NGSSKNKSGSK. The PHD-type zinc-finger motif lies at 200 to 252; the sequence is ETICGACGEAYANGEFWICCDICETWFHGKCVRITPAKAEHIKHYKCPGCSNK.

The protein belongs to the Alfin family. In terms of assembly, interacts with H3K4me3 and to a lesser extent with H3K4me2.

The protein localises to the nucleus. Histone-binding component that specifically recognizes H3 tails trimethylated on 'Lys-4' (H3K4me3), which mark transcription start sites of virtually all active genes. This is PHD finger protein ALFIN-LIKE 4 from Oryza sativa subsp. indica (Rice).